The sequence spans 342 residues: Hypoxia responsive morphology factor C (342 aa).

The Bipartite nuclear localization signal motif lies at 46-68; the sequence is RMKIPRRKSEYSSHDRLKRARKI. The segment at 151–181 is RNA recognition motif (RRM)-like domain; sequence ADDAWAYNAADMDTAVKFFSEAIYKAIESSP.

Belongs to the hrmA family.

Its subcellular location is the nucleus. Probably modulates the generation of the hypoxia-typic morphotype (called H-MORPH) with altered biofilm architecture that leads to increased host inflammation, rapid disease progression, and mortality in a murine model of invasive aspergillosis. The polypeptide is Hypoxia responsive morphology factor C (Aspergillus fumigatus (strain CBS 144.89 / FGSC A1163 / CEA10) (Neosartorya fumigata)).